Consider the following 104-residue polypeptide: uncharacterized protein (104 aa).

The interval 55-104 (RPFSSDRINRPFSPDKKGEPIFPDKRDRPFSPDRINRPFSPDKKGEPIFP) is disordered.

Its subcellular location is the plastid. This is an uncharacterized protein from Euglena longa (Euglenophycean alga).